A 66-amino-acid polypeptide reads, in one-letter code: Large ribosomal subunit protein bL33c (66 aa).

The protein belongs to the bacterial ribosomal protein bL33 family.

It localises to the plastid. Its subcellular location is the chloroplast. The polypeptide is Large ribosomal subunit protein bL33c (Brachypodium distachyon (Purple false brome)).